A 141-amino-acid chain; its full sequence is Nucleoside diphosphate kinase (141 aa).

6 residues coordinate ATP: Lys-11, Phe-59, Arg-87, Thr-93, Arg-104, and Asn-114. The Pros-phosphohistidine intermediate role is filled by His-117.

It belongs to the NDK family. In terms of assembly, homotetramer. Mg(2+) serves as cofactor.

Its subcellular location is the cytoplasm. It carries out the reaction a 2'-deoxyribonucleoside 5'-diphosphate + ATP = a 2'-deoxyribonucleoside 5'-triphosphate + ADP. The catalysed reaction is a ribonucleoside 5'-diphosphate + ATP = a ribonucleoside 5'-triphosphate + ADP. Functionally, major role in the synthesis of nucleoside triphosphates other than ATP. The ATP gamma phosphate is transferred to the NDP beta phosphate via a ping-pong mechanism, using a phosphorylated active-site intermediate. This Pseudomonas fluorescens (strain SBW25) protein is Nucleoside diphosphate kinase.